The sequence spans 46 residues: Iota-conotoxin-like Fi11.8 (46 aa).

4-hydroxyproline is present on residues P2 and P11. Intrachain disulfides connect C5-C19, C12-C22, C18-C27, and C21-C38. P29 carries the 4-hydroxyproline modification. Position 33 is a 6'-bromotryptophan (W33). F44 carries the D-phenylalanine modification.

It belongs to the conotoxin I1 superfamily. Expressed by the venom duct.

It is found in the secreted. Functionally, iota-conotoxins bind to voltage-gated sodium channels (Nav) and act as agonists by shifting the voltage-dependence of activation to more hyperpolarized levels. Produces general excitatory symptoms. The sequence is that of Iota-conotoxin-like Fi11.8 from Conus figulinus (Fig cone).